A 595-amino-acid polypeptide reads, in one-letter code: MGIKGLTKFIADAAPNAIKEIKIENLMGRVVAIDASMSLYQFIIAIRDSEQYGNLTNESGETTSHISGLMSRSIKLMENGLKPIYVFDGAPPELKGSELEKRGEKRQKAEELLKKAKEEGNLEEIKKQSGRTVRVTKKQNEEAKKLLTLMGIPVVEAPCEAESQCAFLTKYNLAHATATEDADALVFGTKILIRNLNANASSTSQNKNKNSSKRGYILTEINLEQVLKGLNLNMNEFIDFCILCGCDYCDTIKGIGSKTAYNLIKEYNSIEKIIENIDKNKYQIPSNFRFVEARDSFINPKVLSKEEIKIDWGEPKIEELKNFLIKDYNFNEVRVTNYINRLLKARKVTTQRRLDNFFTACTKKSTKLVNEESQIKKEVKPKRKGKKRDAPNDSSTKLNSKQNKKPKGEKESKTEKDDGDTHNGNDNEEEGGEGETADMGAKDPFDTEEDEDNPSVNFFHHKSDSESGNVKKESTEQEANATPTGDVYSFPNGKDASGSNIHLSSNSTLHSCNNLNGDKAINESMHVVGSSAPEAGNNEIGNGDLFTSNAADCVNNNTDKTQAEIEMKKKNISFLLPYCPKNVTSVKKRKSVQRC.

An N-domain region spans residues 1-106 (MGIKGLTKFI…SELEKRGEKR (106 aa)). Residue Asp34 coordinates Mg(2+). The DNA site is built by Arg47 and Arg72. 5 residues coordinate Mg(2+): Asp88, Glu160, Glu162, Asp181, and Asp183. The interval 124-267 (EIKKQSGRTV…KTAYNLIKEY (144 aa)) is I-domain. Glu160 provides a ligand contact to DNA. Positions 245 and 247 each coordinate DNA. Asp247 is a Mg(2+) binding site. The tract at residues 350 to 358 (TQRRLDNFF) is interaction with PCNA. A disordered region spans residues 370–493 (NEESQIKKEV…TGDVYSFPNG (124 aa)). The span at 392-401 (NDSSTKLNSK) shows a compositional bias: polar residues. Residues 406–425 (PKGEKESKTEKDDGDTHNGN) show a composition bias toward basic and acidic residues. Residues 426–436 (DNEEEGGEGET) show a composition bias toward acidic residues. Positions 461-475 (HKSDSESGNVKKEST) are enriched in basic and acidic residues.

The protein belongs to the XPG/RAD2 endonuclease family. FEN1 subfamily. In terms of assembly, interacts with PCNA. Three molecules of FEN1 bind to one PCNA trimer with each molecule binding to one PCNA monomer. PCNA stimulates the nuclease activity without altering cleavage specificity. Mg(2+) is required as a cofactor. In terms of processing, phosphorylated. Phosphorylation upon DNA damage induces relocalization to the nuclear plasma.

Its subcellular location is the nucleus. It localises to the nucleolus. The protein resides in the nucleoplasm. It is found in the mitochondrion. Structure-specific nuclease with 5'-flap endonuclease and 5'-3' exonuclease activities involved in DNA replication and repair. During DNA replication, cleaves the 5'-overhanging flap structure that is generated by displacement synthesis when DNA polymerase encounters the 5'-end of a downstream Okazaki fragment. It enters the flap from the 5'-end and then tracks to cleave the flap base, leaving a nick for ligation. Also involved in the long patch base excision repair (LP-BER) pathway, by cleaving within the apurinic/apyrimidinic (AP) site-terminated flap. Acts as a genome stabilization factor that prevents flaps from equilibrating into structures that lead to duplications and deletions. Also possesses 5'-3' exonuclease activity on nicked or gapped double-stranded DNA, and exhibits RNase H activity. Also involved in replication and repair of rDNA and in repairing mitochondrial DNA. The protein is Flap endonuclease 1 of Plasmodium knowlesi (strain H).